Consider the following 98-residue polypeptide: NADH-ubiquinone oxidoreductase chain 4L (98 aa).

3 consecutive transmembrane segments (helical) span residues 1-21, 29-49, and 61-81; these read MSLV…GLLM, SLLC…IMIL, and IILL…LVMV.

Belongs to the complex I subunit 4L family. Core subunit of respiratory chain NADH dehydrogenase (Complex I) which is composed of 45 different subunits.

The protein localises to the mitochondrion inner membrane. It carries out the reaction a ubiquinone + NADH + 5 H(+)(in) = a ubiquinol + NAD(+) + 4 H(+)(out). Functionally, core subunit of the mitochondrial membrane respiratory chain NADH dehydrogenase (Complex I) which catalyzes electron transfer from NADH through the respiratory chain, using ubiquinone as an electron acceptor. Part of the enzyme membrane arm which is embedded in the lipid bilayer and involved in proton translocation. In Mogera wogura (Japanese mole), this protein is NADH-ubiquinone oxidoreductase chain 4L (MT-ND4L).